The primary structure comprises 311 residues: MAKELIFGHQNPDTDAIGTAIAYSYLQNKLGYDTEAVALGEANDETKYALNKFGFTAPRVIKTASNEVDAVMLVDHNEPQQSVSDIDKVKVTHVVDHHRIMNFNTADPLYYRAAPVGCTSTIMWQMYNEKEIEIPQDIAGIMLSAIISDTLLLKSPTTTDQDKEAVEALANIAGVNYKEYGLKMLKAGTNIADKSEEDLIDLDAKSFELNGSNVRVAQINVVDLPEALERKEAFLKAMDEASKSEGYDMFMLLITNILDSDSEALVVGSDESKAKFEKAFNTKLSDSEVKLPGVVSRKKQVVPPLTNAFEA.

Positions 9, 13, 15, 75, 97, and 149 each coordinate Mn(2+).

The protein belongs to the PPase class C family. The cofactor is Mn(2+).

It localises to the cytoplasm. It carries out the reaction diphosphate + H2O = 2 phosphate + H(+). The sequence is that of Probable manganese-dependent inorganic pyrophosphatase from Lactobacillus gasseri (strain ATCC 33323 / DSM 20243 / BCRC 14619 / CIP 102991 / JCM 1131 / KCTC 3163 / NCIMB 11718 / NCTC 13722 / AM63).